We begin with the raw amino-acid sequence, 157 residues long: UPF0262 protein RHE_CH00582 (157 aa).

It belongs to the UPF0262 family.

The sequence is that of UPF0262 protein RHE_CH00582 from Rhizobium etli (strain ATCC 51251 / DSM 11541 / JCM 21823 / NBRC 15573 / CFN 42).